The following is a 330-amino-acid chain: Phenylalanine--tRNA ligase alpha subunit (330 aa).

E257 serves as a coordination point for Mg(2+).

This sequence belongs to the class-II aminoacyl-tRNA synthetase family. Phe-tRNA synthetase alpha subunit type 1 subfamily. Tetramer of two alpha and two beta subunits. It depends on Mg(2+) as a cofactor.

It localises to the cytoplasm. It carries out the reaction tRNA(Phe) + L-phenylalanine + ATP = L-phenylalanyl-tRNA(Phe) + AMP + diphosphate + H(+). This chain is Phenylalanine--tRNA ligase alpha subunit, found in Nostoc sp. (strain PCC 7120 / SAG 25.82 / UTEX 2576).